A 366-amino-acid chain; its full sequence is DNA integrity scanning protein DisA (366 aa).

In terms of domain architecture, DAC spans 21–159; it reads VHTLKGTLQR…EGKAHMLEQP (139 aa). ATP-binding positions include Gly-88, Leu-106, and 119-123; that span reads TRHRS.

This sequence belongs to the DisA family. In terms of assembly, homooctamer. It depends on Mg(2+) as a cofactor.

The enzyme catalyses 2 ATP = 3',3'-c-di-AMP + 2 diphosphate. In terms of biological role, participates in a DNA-damage check-point. DisA forms globular foci that rapidly scan along the chromosomes searching for lesions. Also has diadenylate cyclase activity, catalyzing the condensation of 2 ATP molecules into cyclic di-AMP (c-di-AMP). c-di-AMP likely acts as a signaling molecule that may couple DNA integrity with a cellular process. In Corynebacterium glutamicum (strain R), this protein is DNA integrity scanning protein DisA.